The following is a 308-amino-acid chain: Ornithine carbamoyltransferase (308 aa).

Residues 56 to 59, Gln83, Arg107, and 134 to 137 each bind carbamoyl phosphate; these read STRT and HPCQ. Residues Asn165, Asp225, and 229–230 contribute to the L-ornithine site; that span reads SM. Carbamoyl phosphate is bound by residues 266–267 and Arg294; that span reads CL.

It belongs to the aspartate/ornithine carbamoyltransferase superfamily. OTCase family.

The protein resides in the cytoplasm. It catalyses the reaction carbamoyl phosphate + L-ornithine = L-citrulline + phosphate + H(+). It participates in amino-acid degradation; L-arginine degradation via ADI pathway; carbamoyl phosphate from L-arginine: step 2/2. Its function is as follows. Reversibly catalyzes the transfer of the carbamoyl group from carbamoyl phosphate (CP) to the N(epsilon) atom of ornithine (ORN) to produce L-citrulline. This Cereibacter sphaeroides (strain KD131 / KCTC 12085) (Rhodobacter sphaeroides) protein is Ornithine carbamoyltransferase.